The chain runs to 437 residues: Peptidyl-prolyl cis-trans isomerase CYP38, chloroplastic (437 aa).

A chloroplast-targeting transit peptide spans 1-36 (MAAAFASLPTFSVVNSSRFPRRRIGFSCSKKPLEVR). The N-terminal 56 residues, 37–92 (CSSGNTRYTKQRGAFTSLKECAISLALSVGLMVSVPSIALPPNAHAVANPVIPDVS), are a transit peptide targeting the thylakoid. The region spanning 245 to 437 (VKIKDNPNIE…LANPSYKIAG (193 aa)) is the PPIase cyclophilin-type domain.

In terms of tissue distribution, ubiquitous. Lower levels of expression in roots.

It is found in the plastid. The protein localises to the chloroplast thylakoid lumen. The enzyme catalyses [protein]-peptidylproline (omega=180) = [protein]-peptidylproline (omega=0). Functionally, required for the assembly and stabilization of PSII, but has no PPIases activity. The sequence is that of Peptidyl-prolyl cis-trans isomerase CYP38, chloroplastic (CYP38) from Arabidopsis thaliana (Mouse-ear cress).